Reading from the N-terminus, the 61-residue chain is UPF0434 protein Pfl01_4174 (61 aa).

It belongs to the UPF0434 family.

The chain is UPF0434 protein Pfl01_4174 from Pseudomonas fluorescens (strain Pf0-1).